Here is a 305-residue protein sequence, read N- to C-terminus: uncharacterized protein (305 aa).

The chain crosses the membrane as a helical span at residues 8 to 28 (IGALVTAVIAIGIVFSHMILF).

It localises to the membrane. This is an uncharacterized protein from Bacillus subtilis (strain 168).